The primary structure comprises 53 residues: uncharacterized protein (53 aa).

A helical transmembrane segment spans residues 28–45 (AIVFSLAVFGIVEAYYYW).

It localises to the host membrane. This is an uncharacterized protein from Acidianus convivator (ABV).